A 956-amino-acid chain; its full sequence is Transient receptor potential channel pyrexia (956 aa).

Over 1-491 (MENVRFSIIE…LFLKWRRIRK (491 aa)) the chain is Cytoplasmic. ANK repeat units lie at residues 132–161 (RGRT…DPNR), 166–195 (KEVT…SINI), 198–227 (EKRS…DPNT), 231–260 (YTET…DVRS), 265–294 (GKVT…EVDC), 298–327 (SHQT…NVNA), 331–362 (DGRT…DVNK), and 366–395 (YGYT…DITA). A helical transmembrane segment spans residues 492–512 (FFLMSLAYHTLFVILFTFYVI). Residues 513-525 (WVYVRCCKKEELC) lie on the Extracellular side of the membrane. Residues 526–546 (VAPGYVSTIGYLVIILNLILL) form a helical membrane-spanning segment. At 547–565 (GKEVFQMAHGLRGYAKYWE) the chain is on the cytoplasmic side. A helical membrane pass occupies residues 566 to 584 (NWLQWTIGTGVLLCVTPET). Residues 585–601 (VRTDDLTAVPVWQHHVA) are Extracellular-facing. Residues 602-622 (AIVILLVWLELMMLVGRFPIF) form a helical membrane-spanning segment. At 623–638 (GVYVQMFTKVAVNFAK) the chain is on the cytoplasmic side. Residues 639–659 (FLLAYICLLVAFGLSFAVLFN) traverse the membrane as a helical segment. Residues 660 to 701 (DYPAFENITWSFLKSITMMSGELEFEDIFYGDYAVKFPVTAH) lie on the Extracellular side of the membrane. An N-linked (GlcNAc...) asparagine glycan is attached at N666. Residues 702–722 (IIFLSFVLLVTVILTNLMVGL) traverse the membrane as a helical segment. At 723–956 (AVSDIQGLQV…VASSHIRRHR (234 aa)) the chain is on the cytoplasmic side.

The protein belongs to the transient receptor (TC 1.A.4) family. STrpC subfamily. As to quaternary structure, homooligomer; between isoform A and isoform B. Expressed in various peripheral nerves and the central nerves in embryos. In adults, it is expressed in sensory neurons lying beneath the bristles around eyes, neurons innervating the bristles on the back of thorax and neurons in maxillary palps, proboscis and antennae. Expressed in multidendritic neurons, which mediate temperature sensing, as well as non-multidendritic neurons in larval epidermis. Localizes ubiquitously throughout neurites.

The protein localises to the membrane. In terms of biological role, receptor-activated non-selective cation channel involved in protection or tolerance from high temperature stress. Activated by temperatures above 40 degrees Celsius. More permeable to K(+) than to Na(+). May act in stress protection allow flies to survive in natural environments. In Drosophila melanogaster (Fruit fly), this protein is Transient receptor potential channel pyrexia (pyx).